We begin with the raw amino-acid sequence, 1204 residues long: E3 ubiquitin-protein ligase DZIP3 (1204 aa).

Disordered regions lie at residues 1 to 22 (MDSLAEEFFVSGNPDVEEQTKE) and 640 to 681 (SIPS…EQVS). The segment covering 649–658 (SVKDLQEVKS) has biased composition (basic and acidic residues). A compositionally biased stretch (basic residues) spans 659–668 (KTKKKKRTKS). Coiled-coil stretches lie at residues 746-861 (KETE…TSRA) and 906-941 (QLKAAVDSWNAIVADVRNKIAFLRTQYNEQINKVKQ). Positions 1088–1098 (PKKSESEEKSA) are enriched in basic and acidic residues. The interval 1088–1141 (PKKSESEEKSAQDGNNASPSHTASQPNAPQDPKSAQGSATWEGDKDMDNEEEEE) is disordered. The span at 1099-1126 (QDGNNASPSHTASQPNAPQDPKSAQGSA) shows a compositional bias: polar residues. Over residues 1132–1141 (KDMDNEEEEE) the composition is skewed to acidic residues. The RING-type; atypical zinc-finger motif lies at 1144-1184 (CVICHENLSPENLSVLPCAHKFHSQCIRPWLMQQGTCPTCR).

Probably interacts with DAZL.

Its subcellular location is the cytoplasm. The enzyme catalyses S-ubiquitinyl-[E2 ubiquitin-conjugating enzyme]-L-cysteine + [acceptor protein]-L-lysine = [E2 ubiquitin-conjugating enzyme]-L-cysteine + N(6)-ubiquitinyl-[acceptor protein]-L-lysine.. The protein operates within protein modification; protein ubiquitination. E3 Ubiquitin ligase proteins mediate ubiquitination and subsequent proteasomal degradation of target proteins. E3 ubiquitin ligases accept ubiquitin from an E2 ubiquitin-conjugating enzyme in the form of a thioester and then directly transfers the ubiquitin to targeted substrates. Able to specifically bind RNA. The polypeptide is E3 ubiquitin-protein ligase DZIP3 (Dzip3) (Mus musculus (Mouse)).